The primary structure comprises 72 residues: Toxin Acra II-2 (72 aa).

The region spanning 3-67 (VPGNYPLNTN…VWNAAKNYCK (65 aa)) is the LCN-type CS-alpha/beta domain. Cystine bridges form between C18–C41, C27–C46, and C31–C48.

This sequence belongs to the long (3 C-C) scorpion toxin superfamily. Sodium channel inhibitor family. Beta subfamily. Expressed by the venom gland.

The protein localises to the secreted. In terms of biological role, binds to sodium channels (Nav) and affects the channel activation process. The chain is Toxin Acra II-2 from Androctonus crassicauda (Arabian fat-tailed scorpion).